A 243-amino-acid polypeptide reads, in one-letter code: MADKILTPESQLKKSKAQQKSAEQVAAERAARKAANKEKRAAILERNAAYHKEYETAERAVIQAKREAKANGSYYVESQPKLVFVIRIKGINKIAPKPRKVLQLLRLNQINSGVFVKVTKATTELLRLVEPYVAYGYPSYSTIRQLVYKRGYGKINKQRIALSENSIVEANLGKYGIISVDDLIHEIITVGPHFKQANNFLWPFKLSNPSGGWGVPRKFKHFIQGGAFGNREEFINKLVKSMN.

The segment at 1-31 is disordered; it reads MADKILTPESQLKKSKAQQKSAEQVAAERAA. Low complexity predominate over residues 18–28; sequence QQKSAEQVAAE.

Belongs to the universal ribosomal protein uL30 family.

The chain is Large ribosomal subunit protein uL30 (RPL7) from Eremothecium gossypii (strain ATCC 10895 / CBS 109.51 / FGSC 9923 / NRRL Y-1056) (Yeast).